A 705-amino-acid polypeptide reads, in one-letter code: p-hydroxybenzoic acid--AMP ligase FadD22 (705 aa).

The 79-residue stretch at Glu541 to Leu619 folds into the Carrier domain. Ser579 bears the O-(pantetheine 4'-phosphoryl)serine mark.

Belongs to the ATP-dependent AMP-binding enzyme family.

It catalyses the reaction holo-[4-hydroxyphenylalkanoate synthase] + 4-hydroxybenzoate + ATP = 4-hydroxyphenyl-[4-hydroxyphenylalkanoate synthase] + AMP + diphosphate. Its pathway is lipid metabolism; fatty acid biosynthesis. Catalyzes the adenylation of p-hydroxybenzoic acid (pHBA) to form p-hydroxybenzoic acid-AMP (pHBA-AMP), which is converted directly to p-hydroxybenzoyl-S-FadD22 (pHBA-S-FAdD22) thioester intermediate in a CoA-independent manner by attack of the phosphopantetheine thiol of FadD22. Usually, this intermediate primes the biosynthesis of the phenolphthiocerol (PPOL) by presenting the pHBA starter unit for elongation by Pks15/1, but M.tuberculosis lacks Pks15/1 due to a natural frameshift and thus is unable to produce PPOL. This is p-hydroxybenzoic acid--AMP ligase FadD22 (fadD22) from Mycobacterium tuberculosis (strain CDC 1551 / Oshkosh).